The following is a 220-amino-acid chain: Large ribosomal subunit protein uL3 (220 aa).

The tract at residues 126–158 is disordered; it reads GFQGAIKRHGQSRGPMSHGSRYHRRPGSMGMAS.

This sequence belongs to the universal ribosomal protein uL3 family. In terms of assembly, part of the 50S ribosomal subunit. Forms a cluster with proteins L14 and L19.

One of the primary rRNA binding proteins, it binds directly near the 3'-end of the 23S rRNA, where it nucleates assembly of the 50S subunit. The polypeptide is Large ribosomal subunit protein uL3 (Macrococcus caseolyticus (strain JCSC5402) (Macrococcoides caseolyticum)).